The primary structure comprises 337 residues: Mannan polymerase complex subunit mnn9 (337 aa).

Residues 1-8 (MRVYNKSR) lie on the Cytoplasmic side of the membrane. Residues 9–29 (IVGQLLFVALGITFIYYLFTP) traverse the membrane as a helical; Signal-anchor for type II membrane protein segment. The Lumenal portion of the chain corresponds to 30 to 337 (SVNSNAKVQI…PYYLVFHHNE (308 aa)).

This sequence belongs to the ANP1/MMN9/VAN1 family.

It is found in the endoplasmic reticulum membrane. It localises to the golgi apparatus membrane. Its pathway is protein modification; protein glycosylation. In terms of biological role, required for the addition of the long alpha 1,6-mannose backbone of N-linked glycans on cell wall and periplasmic proteins. The sequence is that of Mannan polymerase complex subunit mnn9 from Schizosaccharomyces pombe (strain 972 / ATCC 24843) (Fission yeast).